Reading from the N-terminus, the 352-residue chain is Secreted RxLR effector protein 122 (352 aa).

The N-terminal stretch at 1–21 (MRGAYYVLIALLVVASSQTSA) is a signal peptide. The RxLR-dEER motif lies at 48–65 (QFLRGSRNVPGDLAHEER). Residues 280–290 (RGGTTGASRGT) show a composition bias toward low complexity. The tract at residues 280 to 352 (RGGTTGASRG…VEPEGHRSKP (73 aa)) is disordered. Residues 302–315 (AASTSKGKSSVFTE) show a composition bias toward polar residues.

It belongs to the RxLR effector family.

It localises to the secreted. The protein resides in the host nucleus. In terms of biological role, secreted effector that acts as an elicitor that induces cell death in host plant cells. The chain is Secreted RxLR effector protein 122 from Plasmopara viticola (Downy mildew of grapevine).